A 322-amino-acid polypeptide reads, in one-letter code: Digestive cysteine proteinase 1 (322 aa).

The signal sequence occupies residues 1–16; it reads MKVVALFLFGLALAAA. Residues 17-105 constitute a propeptide, activation peptide; that stretch reads NPSWEEFKGK…VFTSTDAAPE (89 aa). 3 disulfides stabilise this stretch: Cys-126–Cys-170, Cys-160–Cys-203, and Cys-262–Cys-311. Cys-129 is a catalytic residue. Catalysis depends on residues His-269 and Asn-289.

It belongs to the peptidase C1 family.

Its activity is regulated as follows. Inhibited by E-64, antipain, leupeptin, heavy metal ions, iodoacetic acid, dithionitrobenzene, p-hydroxymercuri-benzoate; activated by mercaptoethanol and dithiothreitol. The protein is Digestive cysteine proteinase 1 (LCP1) of Homarus americanus (American lobster).